Reading from the N-terminus, the 301-residue chain is Mas-related G-protein coupled receptor member A6 (301 aa).

Over 1-15 the chain is Extracellular; the sequence is MHRSISIRILITNLM. Residues 16-36 traverse the membrane as a helical segment; that stretch reads IVILGLVGLTGNAIVFWLLLF. Residues 37 to 42 lie on the Cytoplasmic side of the membrane; the sequence is RLRRNA. The chain crosses the membrane as a helical span at residues 43 to 63; it reads FSIYILNLALADFLFLLCHII. At 64–77 the chain is on the extracellular side; that stretch reads ASTEHILTFSSPNS. The chain crosses the membrane as a helical span at residues 78–98; it reads IFINCLYTFRVLLYIAGLNML. At 99-128 the chain is on the cytoplasmic side; the sequence is SAISIERCLSVMCPIWYRCHRPEHTSTVMC. Residues 129–149 traverse the membrane as a helical segment; sequence AMIWVLSLLLCILYRYFCGFL. Topologically, residues 150–163 are extracellular; the sequence is DTKYEDDYGCLAMN. The helical transmembrane segment at 164–184 threads the bilayer; sequence FLTTAYLMFLFVVLCVSSLAL. At 185–203 the chain is on the cytoplasmic side; it reads LARLFCGAGRMKLTRLYVT. Residues 204–224 form a helical membrane-spanning segment; sequence ITLTLLVFLLCGLPCGFYWFL. The Extracellular portion of the chain corresponds to 225–240; sequence LSKIKNVFSVFEFSLY. Residues 241–261 traverse the membrane as a helical segment; the sequence is LTSVVLTAINSCANPIIYFFV. Residues 262–301 are Cytoplasmic-facing; that stretch reads GSFRHRLKHQTLKMVLQSALQDTPETPENMVEMSRNKAEL.

This sequence belongs to the G-protein coupled receptor 1 family. Mas subfamily. In terms of tissue distribution, expressed in a subset of sensory neurons that includes nociceptors. Expressed in the subclass of non-peptidergic sensory neurons that are IB4(+) and VR1(-).

The protein resides in the cell membrane. Functionally, orphan receptor. May be a receptor for RFamide-family neuropeptides such as NPFF and NPAF, which are analgesic in vivo. May regulate nociceptor function and/or development, including the sensation or modulation of pain. This Mus musculus (Mouse) protein is Mas-related G-protein coupled receptor member A6 (Mrgpra6).